The following is a 31-amino-acid chain: Cytochrome b6-f complex subunit 6 (31 aa).

A helical transmembrane segment spans residues 3 to 23 (LFIGYIIFLVAFFGLATGLFL).

It belongs to the PetL family. The 4 large subunits of the cytochrome b6-f complex are cytochrome b6, subunit IV (17 kDa polypeptide, PetD), cytochrome f and the Rieske protein, while the 4 small subunits are PetG, PetL, PetM and PetN. The complex functions as a dimer.

It localises to the plastid. The protein resides in the chloroplast thylakoid membrane. Functionally, component of the cytochrome b6-f complex, which mediates electron transfer between photosystem II (PSII) and photosystem I (PSI), cyclic electron flow around PSI, and state transitions. PetL is important for photoautotrophic growth as well as for electron transfer efficiency and stability of the cytochrome b6-f complex. In Porphyra purpurea (Red seaweed), this protein is Cytochrome b6-f complex subunit 6.